The chain runs to 274 residues: Large ribosomal subunit protein uL2cz/uL2cy (274 aa).

Disordered regions lie at residues Met1–Lys23 and Met223–Lys274.

It belongs to the universal ribosomal protein uL2 family. Part of the 50S ribosomal subunit.

It localises to the plastid. Its subcellular location is the chloroplast. The polypeptide is Large ribosomal subunit protein uL2cz/uL2cy (rpl2-A) (Ranunculus macranthus (Large buttercup)).